Here is a 321-residue protein sequence, read N- to C-terminus: Protein APA1 (321 aa).

The interval 50–70 (SLIEKPERGQTPEGEDPLGKP) is disordered. Residue Lys-54 participates in substrate binding. Residue Thr-60 is modified to Phosphothreonine. Residues 93–94 (NK), Asn-145, and 151–154 (GSSL) each bind substrate. The Nucleophile role is filled by His-158. Substrate-binding positions include Gln-160, 273–275 (NST), Met-280, and Lys-284.

Belongs to the ATP adenylyltransferase family. As to quaternary structure, monomer. Requires a divalent metal cation as cofactor. Post-translationally, the N-terminus is blocked.

The protein resides in the cytoplasm. It localises to the nucleus. It catalyses the reaction ADP + ATP + H(+) = P(1),P(4)-bis(5'-adenosyl) tetraphosphate + phosphate. The catalysed reaction is sulfate + ADP + H(+) = adenosine 5'-phosphosulfate + phosphate. In terms of biological role, ap4A phosphorylase catalyzes the phosphorolytic degradation of bis(5'-adenosyl) tetraphosphate (Ap4A) into ADP and ATP. Can also use other Np4N' nucleotides (where N and N' stand for A,C,G or U) as substrates with equal efficiency. Cannot catalyze the reverse reaction. Additionally, this enzyme can also catalyze the phosphorolytic degradation of adenosine 5'-phosphosulfate (AMPS) into ADP and sulfate, the reversible exchange reaction between inorganic phosphate and the beta-phosphate of a nucleoside diphosphate (NDP), and the synthesis of Ap4A from AMPS plus ATP. The sequence is that of Protein APA1 from Saccharomyces cerevisiae (strain ATCC 204508 / S288c) (Baker's yeast).